Consider the following 473-residue polypeptide: 3-isopropylmalate dehydratase large subunit (473 aa).

Cys354, Cys414, and Cys417 together coordinate [4Fe-4S] cluster. The disordered stretch occupies residues 425 to 448; the sequence is LAPGQRSASTSNRNFEGRQGRGGR.

It belongs to the aconitase/IPM isomerase family. LeuC type 1 subfamily. In terms of assembly, heterodimer of LeuC and LeuD. The cofactor is [4Fe-4S] cluster.

It catalyses the reaction (2R,3S)-3-isopropylmalate = (2S)-2-isopropylmalate. Its pathway is amino-acid biosynthesis; L-leucine biosynthesis; L-leucine from 3-methyl-2-oxobutanoate: step 2/4. Its function is as follows. Catalyzes the isomerization between 2-isopropylmalate and 3-isopropylmalate, via the formation of 2-isopropylmaleate. The protein is 3-isopropylmalate dehydratase large subunit of Acidothermus cellulolyticus (strain ATCC 43068 / DSM 8971 / 11B).